The sequence spans 591 residues: MIVLPNKVRIFINDRMKKDIYLGISNFGFENDIDEILGIAHLLEHLLISFDSTNFLANASTSRSYMSFWCKSINSATESDAIRTLVSWFFSNGKLKDNFSLSSIRFHIKELENEYYFRNEVFHCMDILTFLSGGDLYNGGRIDMIDNLNIVRDMLVNRMQRISGSNIVIFVKRLGPGTLDFFKQTFGSLPSCPEIIPSSIPVSTNGKIVMTPAPFYTVMVRINPTLDNILGILYLYETYHLIDYETIGNQLYLTVSFIDETEYESFLRGEAILQISQCQSINMNYSDDYMMNIYLNFPWLSHDLYDYITRINDDSKSILISLTNEIYTSIINRDIIVIYPNFSKAMCNTRDTQQHQIVVLDATNDGLIKKPYRSIPLMKRLTSNEIFIRYGDASLMDMITLSLSKQDISLKRNAEGIRVKHSFSADDIQAIMESDSFLKYSRSKPAAMYQYIFLSFFASGNSIDDILTNRDSTLEFSKRTKSKILFGRNTRYDITAKSSFVCGIVRGKSLDKTSLVEMMWDLKKKGLIYSMEFTNLLSKNTFYLFTFTIYTDEVYDYLNNNKLFSAKCLVVSTKGDVENFSSLKKDVVIRF.

Histidine 41 contacts Zn(2+). Residue glutamate 44 is part of the active site. Residues histidine 45 and glutamate 112 each coordinate Zn(2+).

It belongs to the peptidase M44 family. It depends on Zn(2+) as a cofactor. Undergoes proteolytic processing during the course of infection. May be cleaved into 46 kDa and 22 kDa products (Potential).

It localises to the virion. Its function is as follows. Probably involved in maturation of some viral proteins by processing them preferentially at Ala-Gly-|-Ser/Thr/Lys motifs. Does not seem to be responsible for the cleavage of major core proteins. The chain is Metalloendopeptidase OPG085 (OPG085) from Monkeypox virus.